A 405-amino-acid chain; its full sequence is L-rhamnonate dehydratase (405 aa).

2 residues coordinate substrate: His33 and Arg59. Residues Asp226, Glu252, and Glu280 each coordinate Mg(2+). The active-site Proton acceptor is the His329. Glu349 serves as a coordination point for substrate.

Belongs to the mandelate racemase/muconate lactonizing enzyme family. RhamD subfamily. As to quaternary structure, homooctamer; tetramer of dimers. Mg(2+) serves as cofactor.

The enzyme catalyses L-rhamnonate = 2-dehydro-3-deoxy-L-rhamnonate + H2O. In terms of biological role, catalyzes the dehydration of L-rhamnonate to 2-keto-3-deoxy-L-rhamnonate (KDR). Can also dehydrate L-lyxonate and L-mannonate, although less efficiently, but not 2-keto-4-hydroxyheptane-1,7-dioate. The protein is L-rhamnonate dehydratase (rhmD) of Salmonella typhimurium (strain LT2 / SGSC1412 / ATCC 700720).